The primary structure comprises 253 residues: Phosphonates import ATP-binding protein PhnC (253 aa).

One can recognise an ABC transporter domain in the interval 4–247 (VRFEGVTKRF…QAVAMIYRAG (244 aa)). 36 to 43 (GLSGSGKS) serves as a coordination point for ATP.

This sequence belongs to the ABC transporter superfamily. Phosphonates importer (TC 3.A.1.9.1) family. In terms of assembly, the complex is composed of two ATP-binding proteins (PhnC), two transmembrane proteins (PhnE) and a solute-binding protein (PhnD).

Its subcellular location is the cell membrane. It carries out the reaction phosphonate(out) + ATP + H2O = phosphonate(in) + ADP + phosphate + H(+). Part of the ABC transporter complex PhnCDE involved in phosphonates import. Responsible for energy coupling to the transport system. The polypeptide is Phosphonates import ATP-binding protein PhnC (Frankia casuarinae (strain DSM 45818 / CECT 9043 / HFP020203 / CcI3)).